The chain runs to 94 residues: Probable HNH endonuclease (94 aa).

It belongs to the skunalikevirus HNH endonuclease family.

Probable HNH endonuclease. The protein is Probable HNH endonuclease of Lactococcus lactis (Lactococcus lactis bacteriophage SK1).